Reading from the N-terminus, the 64-residue chain is MSRKCEICGKGPSTGNNVSHANNKTRTTWYPNLQKVKAKAANGSVSTIKVCTRCIRSGSVTKAL.

It belongs to the bacterial ribosomal protein bL28 family.

The protein is Large ribosomal subunit protein bL28 of Trichlorobacter lovleyi (strain ATCC BAA-1151 / DSM 17278 / SZ) (Geobacter lovleyi).